Reading from the N-terminus, the 362-residue chain is Ferredoxin--NADP reductase 1 (362 aa).

FAD is bound by residues Asp47, Gln55, Tyr60, Ala100, Phe141, Asp309, and Ser350.

This sequence belongs to the ferredoxin--NADP reductase type 2 family. In terms of assembly, homodimer. FAD serves as cofactor.

The enzyme catalyses 2 reduced [2Fe-2S]-[ferredoxin] + NADP(+) + H(+) = 2 oxidized [2Fe-2S]-[ferredoxin] + NADPH. The sequence is that of Ferredoxin--NADP reductase 1 from Cupriavidus pinatubonensis (strain JMP 134 / LMG 1197) (Cupriavidus necator (strain JMP 134)).